A 214-amino-acid chain; its full sequence is Small ribosomal subunit protein uS2 (214 aa).

This sequence belongs to the universal ribosomal protein uS2 family.

This Methanococcoides burtonii (strain DSM 6242 / NBRC 107633 / OCM 468 / ACE-M) protein is Small ribosomal subunit protein uS2.